The chain runs to 518 residues: Probable G-protein coupled receptor Mth-like 2 (518 aa).

The signal sequence occupies residues 1-26 (MIASSKMLLSASILIYFLLNLQSSSA). Topologically, residues 27–220 (EIADCSFYDT…CLILPSRTGQ (194 aa)) are extracellular. Disulfide bonds link cysteine 31–cysteine 85, cysteine 87–cysteine 92, cysteine 96–cysteine 190, cysteine 97–cysteine 108, and cysteine 152–cysteine 211. The N-linked (GlcNAc...) asparagine glycan is linked to asparagine 47. 3 N-linked (GlcNAc...) asparagine glycosylation sites follow: asparagine 111, asparagine 125, and asparagine 201. The chain crosses the membrane as a helical span at residues 221–241 (TVVMITSLICLVLTIAVYLCV). At 242 to 250 (KKLMNLEGK) the chain is on the cytoplasmic side. The chain crosses the membrane as a helical span at residues 251 to 271 (CFICYMMCLFFGYLFLLLDLW). Topologically, residues 272-279 (ELSLDFCK) are extracellular. The helical transmembrane segment at 280-300 (AAGFLGYFFVMAAFFWLSIIS) threads the bilayer. Residues 301–321 (RHYWKCLTNPCASMNIRSERA) lie on the Cytoplasmic side of the membrane. Residues 322-342 (FLLYSCFAWAMPLALTGVTYL) form a helical membrane-spanning segment. Residues 343 to 371 (ADNVVNNEEWQPRVGDEGHCWIYTKSWSA) lie on the Extracellular side of the membrane. A helical membrane pass occupies residues 372-392 (MVYFYGPMVLLILFNITMFVL). Topologically, residues 393–426 (TAKHIIDSKRTLRKIARNEGRIQKLNSDKQNYTQ) are cytoplasmic. Residues 427–447 (FLLLFTVMGMSWSFEIFSYLV) form a helical membrane-spanning segment. Residues 448 to 455 (QREKLWVN) lie on the Extracellular side of the membrane. The chain crosses the membrane as a helical span at residues 456 to 476 (IFLVADYFNWSQGVIIFVLFI). At 477–518 (LRRKTLVLFKKQIFPKQRAFSRSATQSTIESISQTKRHFNMT) the chain is on the cytoplasmic side.

The protein belongs to the G-protein coupled receptor 2 family. Mth subfamily.

The protein localises to the cell membrane. The protein is Probable G-protein coupled receptor Mth-like 2 (mthl2) of Drosophila melanogaster (Fruit fly).